Here is a 379-residue protein sequence, read N- to C-terminus: Leukocyte elastase inhibitor A (379 aa).

Residue serine 300 is modified to Phosphoserine. Positions 351–379 (EFTVDHPFIFFIRHNPTSNVLFLGRVCSP) are CARD-binding motif (CBM).

Belongs to the serpin family. Ov-serpin subfamily. As to quaternary structure, monomer. Interacts (via C-terminus) with CASP1 and CASP4 (via CARD domain); these interactions regulate the activity of inflammatory caspases. As to expression, ubiquitous with higher expression in pancreas, spleen and bone marrow.

The protein resides in the secreted. It localises to the cytoplasm. Its subcellular location is the cytolytic granule. It is found in the early endosome. Neutrophil serine protease inhibitor that plays an essential role in the regulation of the innate immune response, inflammation and cellular homeostasis. Acts primarily to protect the cell from proteases released in the cytoplasm during stress or infection. These proteases are important in killing microbes but when released from granules, these potent enzymes also destroy host proteins and contribute to mortality. Regulates the activity of the neutrophil proteases elastase, cathepsin G, proteinase-3, chymase, chymotrypsin, and kallikrein-3. Also acts as a potent intracellular inhibitor of granzyme H. During inflammation, limits the activity of inflammatory caspases CASP1 and CASP4 by suppressing their caspase-recruitment domain (CARD) oligomerization and enzymatic activation. In addition, promotes the proliferation of beta-cells when secreted. This is Leukocyte elastase inhibitor A (Serpinb1a) from Mus musculus (Mouse).